The primary structure comprises 794 residues: Signal transducer and activator of transcription 5A (794 aa).

Phosphotyrosine is present on Tyr-90. Ser-128 is modified (phosphoserine). One can recognise an SH2 domain in the interval 589 to 686; that stretch reads WNDGAILGFV…EVFSKYYTPV (98 aa). Residue Tyr-682 is modified to Phosphotyrosine. Position 694 is a phosphotyrosine; by JAK2 (Tyr-694). The segment at 771–794 is disordered; that stretch reads PMDSLEPSLPPPTGLFTPGRGSLS.

Belongs to the transcription factor STAT family. Forms a homodimer or a heterodimer with a related family member. Binds NR3C1. Interacts with NCOA1 and SOCS7. Interacts with ERBB4. Interacts with EBF4. Interacts with CD69. In terms of processing, ISGylated. Post-translationally, tyrosine phosphorylated in response to KITLG/SCF, IL2, IL3, IL7, IL15, CSF2/GMCSF, GH1, PRL, EPO and THPO. Activated KIT promotes phosphorylation on tyrosine residues and subsequent translocation to the nucleus. Tyrosine phosphorylated in response to constitutively activated FGFR1, FGFR2, FGFR3 and FGFR4. Tyrosine phosphorylation is required for DNA-binding activity and dimerization. Serine phosphorylation is also required for maximal transcriptional activity. Tyrosine phosphorylated in response to signaling via activated FLT3; wild-type FLT3 results in much weaker phosphorylation than constitutively activated mutant FLT3. Alternatively, can be phosphorylated by JAK2 at Tyr-694.

The protein resides in the cytoplasm. The protein localises to the nucleus. In terms of biological role, carries out a dual function: signal transduction and activation of transcription. Mediates cellular responses to the cytokine KITLG/SCF and other growth factors. May mediate cellular responses to activated FGFR1, FGFR2, FGFR3 and FGFR4. Binds to the GAS element and activates PRL-induced transcription. Regulates the expression of milk proteins during lactation. The chain is Signal transducer and activator of transcription 5A (STAT5A) from Bos taurus (Bovine).